The following is a 311-amino-acid chain: Bifunctional protein FolD (311 aa).

174 to 176 (GKG) provides a ligand contact to NADP(+).

It belongs to the tetrahydrofolate dehydrogenase/cyclohydrolase family. As to quaternary structure, homodimer.

It catalyses the reaction (6R)-5,10-methylene-5,6,7,8-tetrahydrofolate + NADP(+) = (6R)-5,10-methenyltetrahydrofolate + NADPH. The enzyme catalyses (6R)-5,10-methenyltetrahydrofolate + H2O = (6R)-10-formyltetrahydrofolate + H(+). It participates in one-carbon metabolism; tetrahydrofolate interconversion. Catalyzes the oxidation of 5,10-methylenetetrahydrofolate to 5,10-methenyltetrahydrofolate and then the hydrolysis of 5,10-methenyltetrahydrofolate to 10-formyltetrahydrofolate. This Pyrobaculum neutrophilum (strain DSM 2338 / JCM 9278 / NBRC 100436 / V24Sta) (Thermoproteus neutrophilus) protein is Bifunctional protein FolD.